The sequence spans 157 residues: Transcription elongation factor GreA (157 aa).

Positions 1–75 (MSKEIILTQE…VETLINRAKV (75 aa)) form a coiled coil.

This sequence belongs to the GreA/GreB family.

Necessary for efficient RNA polymerase transcription elongation past template-encoded arresting sites. The arresting sites in DNA have the property of trapping a certain fraction of elongating RNA polymerases that pass through, resulting in locked ternary complexes. Cleavage of the nascent transcript by cleavage factors such as GreA or GreB allows the resumption of elongation from the new 3'terminus. GreA releases sequences of 2 to 3 nucleotides. The polypeptide is Transcription elongation factor GreA (Mycoplasma capricolum subsp. capricolum (strain California kid / ATCC 27343 / NCTC 10154)).